A 75-amino-acid chain; its full sequence is MPQISRYSDEQVEQLLAELLNVLEKHKAPTDLSLMVLGNMVTNLINTSIASAQRQAIANSFARALQSSINEDKAH.

It belongs to the UPF0352 family.

This is UPF0352 protein YejL from Escherichia coli O139:H28 (strain E24377A / ETEC).